The following is a 1227-amino-acid chain: Protein transport protein Sec31A (1227 aa).

7 WD repeats span residues 4 to 47 (KEID…EIFE), 64 to 111 (SSAH…AGDT), 120 to 160 (KHTG…TPMT), 166 to 206 (QPLE…PIIK), 209 to 254 (DHNN…SPLR), 258 to 298 (SHTR…VLYE), and 301 to 342 (TNMQ…DGLR). One copy of the WD 8; interaction with SEC13 repeat lies at 397–430 (SFSFGGKLVTFENAKPQQQPGIDQQPQHHYVYVS). Disordered regions lie at residues 804–875 (EAIK…YSQA), 905–1008 (QPVA…GWND), and 1040–1075 (ADPQAQMQQPPAAPVGTPSFQPQQLSTGQQAPLGPY). A compositionally biased stretch (low complexity) spans 905 to 924 (QPVAAPASASYPSPASNTNP). Residues 925–945 (PYLPAAQPVPSPLYPGQPQPS) show a composition bias toward pro residues. The span at 995–1006 (PASQRTGPQNGW) shows a compositional bias: polar residues. Residues 1040–1049 (ADPQAQMQQP) show a composition bias toward low complexity. Polar residues predominate over residues 1057 to 1069 (PSFQPQQLSTGQQ).

The protein belongs to the WD repeat SEC31 family. COPII is composed of at least 5 proteins: the SEC23/24 complex, the SEC13/31 complex and SAR1. SEC13 and SEC31 make a 2:2 tetramer that forms the edge element of the COPII outer coat. The tetramer self-assembles in multiple copies to form the complete polyhedral cage. Interacts (via WD 8) with SEC13.

Its subcellular location is the cytoplasm. The protein resides in the cytoplasmic vesicle. The protein localises to the COPII-coated vesicle membrane. It is found in the endoplasmic reticulum membrane. Component of the coat protein complex II (COPII) which promotes the formation of transport vesicles from the endoplasmic reticulum (ER). The coat has two main functions, the physical deformation of the endoplasmic reticulum membrane into vesicles and the selection of cargo molecules. The protein is Protein transport protein Sec31A (SEC31A) of Gallus gallus (Chicken).